A 100-amino-acid polypeptide reads, in one-letter code: Putative septation protein SpoVG (100 aa).

Belongs to the SpoVG family.

Could be involved in septation. In Staphylococcus haemolyticus (strain JCSC1435), this protein is Putative septation protein SpoVG.